A 179-amino-acid polypeptide reads, in one-letter code: DELTA-miturgitoxin-Cp2a (179 aa).

Positions 1–20 are cleaved as a signal peptide; the sequence is MKFSLFFGVLFLAILHSCLS. Residues 21–47 constitute a propeptide that is removed on maturation; sequence ESEKDLTDEDHFRSSDSFLSEIQEESR. Residues 44 to 47 carry the Processing quadruplet motif motif; that stretch reads EESR. Intrachain disulfides connect C51-C66, C58-C75, C65-C88, C77-C86, C115-C130, C122-C139, C129-C158, and C141-C156. V178 is subject to Valine amide.

It belongs to the spider toxin CSTX family. Double-CSTX subfamily. Cleavage of the propeptide depends on the processing quadruplet motif (XXXR, with at least one of X being E). As to expression, expressed by the venom gland.

It is found in the secreted. Its function is as follows. Spider venom toxin that exhibits cytolytic activity by forming an alpha-helix across the membrane. Lethal to insect larvae. This Cheiracanthium punctorium (Yellow sac spider) protein is DELTA-miturgitoxin-Cp2a.